The sequence spans 465 residues: Cysteine--tRNA ligase (465 aa).

Cysteine 27 provides a ligand contact to Zn(2+). The 'HIGH' region motif lies at 29-39; sequence PTVYDDAHLGH. Residues cysteine 207, histidine 237, and glutamate 241 each coordinate Zn(2+). Positions 269–273 match the 'KMSKS' region motif; sequence KMSKS. Lysine 272 lines the ATP pocket.

The protein belongs to the class-I aminoacyl-tRNA synthetase family. Monomer. Zn(2+) serves as cofactor.

It localises to the cytoplasm. The enzyme catalyses tRNA(Cys) + L-cysteine + ATP = L-cysteinyl-tRNA(Cys) + AMP + diphosphate. The protein is Cysteine--tRNA ligase of Helicobacter pylori (strain P12).